The sequence spans 297 residues: Aspartate carbamoyltransferase catalytic subunit (297 aa).

Positions 49 and 50 each coordinate carbamoyl phosphate. Position 77 (Lys77) interacts with L-aspartate. Residues Arg99, His129, and Gln132 each coordinate carbamoyl phosphate. L-aspartate contacts are provided by Arg162 and Arg215. The carbamoyl phosphate site is built by Gly256 and Pro257.

This sequence belongs to the aspartate/ornithine carbamoyltransferase superfamily. ATCase family. Heterododecamer (2C3:3R2) of six catalytic PyrB chains organized as two trimers (C3), and six regulatory PyrI chains organized as three dimers (R2).

It catalyses the reaction carbamoyl phosphate + L-aspartate = N-carbamoyl-L-aspartate + phosphate + H(+). It functions in the pathway pyrimidine metabolism; UMP biosynthesis via de novo pathway; (S)-dihydroorotate from bicarbonate: step 2/3. Its function is as follows. Catalyzes the condensation of carbamoyl phosphate and aspartate to form carbamoyl aspartate and inorganic phosphate, the committed step in the de novo pyrimidine nucleotide biosynthesis pathway. The sequence is that of Aspartate carbamoyltransferase catalytic subunit from Legionella pneumophila subsp. pneumophila (strain Philadelphia 1 / ATCC 33152 / DSM 7513).